Here is a 345-residue protein sequence, read N- to C-terminus: S-adenosylmethionine:tRNA ribosyltransferase-isomerase (345 aa).

It belongs to the QueA family. Monomer.

It localises to the cytoplasm. The enzyme catalyses 7-aminomethyl-7-carbaguanosine(34) in tRNA + S-adenosyl-L-methionine = epoxyqueuosine(34) in tRNA + adenine + L-methionine + 2 H(+). It functions in the pathway tRNA modification; tRNA-queuosine biosynthesis. Its function is as follows. Transfers and isomerizes the ribose moiety from AdoMet to the 7-aminomethyl group of 7-deazaguanine (preQ1-tRNA) to give epoxyqueuosine (oQ-tRNA). The protein is S-adenosylmethionine:tRNA ribosyltransferase-isomerase of Helicobacter pylori (strain ATCC 700392 / 26695) (Campylobacter pylori).